Consider the following 118-residue polypeptide: Large ribosomal subunit protein bL20 (118 aa).

This sequence belongs to the bacterial ribosomal protein bL20 family.

In terms of biological role, binds directly to 23S ribosomal RNA and is necessary for the in vitro assembly process of the 50S ribosomal subunit. It is not involved in the protein synthesizing functions of that subunit. This Serratia proteamaculans (strain 568) protein is Large ribosomal subunit protein bL20.